A 443-amino-acid chain; its full sequence is Methylenetetrahydrofolate--tRNA-(uracil-5-)-methyltransferase TrmFO (443 aa).

FAD is bound at residue 8–13; it reads GAGLAG.

This sequence belongs to the MnmG family. TrmFO subfamily. FAD is required as a cofactor.

Its subcellular location is the cytoplasm. The catalysed reaction is uridine(54) in tRNA + (6R)-5,10-methylene-5,6,7,8-tetrahydrofolate + NADH + H(+) = 5-methyluridine(54) in tRNA + (6S)-5,6,7,8-tetrahydrofolate + NAD(+). It catalyses the reaction uridine(54) in tRNA + (6R)-5,10-methylene-5,6,7,8-tetrahydrofolate + NADPH + H(+) = 5-methyluridine(54) in tRNA + (6S)-5,6,7,8-tetrahydrofolate + NADP(+). Functionally, catalyzes the folate-dependent formation of 5-methyl-uridine at position 54 (M-5-U54) in all tRNAs. This Thermus thermophilus (strain ATCC BAA-163 / DSM 7039 / HB27) protein is Methylenetetrahydrofolate--tRNA-(uracil-5-)-methyltransferase TrmFO.